The sequence spans 550 residues: Medium/long-chain-fatty-acid--CoA/3-oxocholest-4-en-26-oate--CoA ligase (550 aa).

Residues 178 to 186 (TGGTTGFPK), D419, R434, and K525 contribute to the ATP site. The disordered stretch occupies residues 525–550 (KPDYRWAKEQTEARPADDVHAAHVSA).

Belongs to the ATP-dependent AMP-binding enzyme family.

The catalysed reaction is a medium-chain fatty acid + ATP + CoA = a medium-chain fatty acyl-CoA + AMP + diphosphate. The enzyme catalyses a long-chain fatty acid + ATP + CoA = a long-chain fatty acyl-CoA + AMP + diphosphate. It catalyses the reaction (25S)-3-oxocholest-4-en-26-oate + ATP + CoA = (25S)-3-oxocholest-4-en-26-oyl-CoA + AMP + diphosphate. The protein operates within lipid metabolism; fatty acid biosynthesis. Its pathway is steroid metabolism; cholesterol metabolism. In terms of biological role, catalyzes the activation of medium/long-chain fatty acids as acyl-coenzyme A (acyl-CoA), which are then transferred to the multifunctional polyketide synthase (PKS) type III for further chain extension. Also involved in the degradation of cholesterol via the degradation of the side chains of C-24 branched-chain sterols. Catalyzes the ATP-dependent CoA thioesterification of the sterol 3-oxocholest-4-en-26-oate to yield 3-oxocholest-4-en-26-oyl-CoA. The sequence is that of Medium/long-chain-fatty-acid--CoA/3-oxocholest-4-en-26-oate--CoA ligase from Mycobacterium marinum (strain ATCC BAA-535 / M).